A 556-amino-acid polypeptide reads, in one-letter code: Formate--tetrahydrofolate ligase (556 aa).

T65 to S72 serves as a coordination point for ATP.

It belongs to the formate--tetrahydrofolate ligase family.

It catalyses the reaction (6S)-5,6,7,8-tetrahydrofolate + formate + ATP = (6R)-10-formyltetrahydrofolate + ADP + phosphate. The protein operates within one-carbon metabolism; tetrahydrofolate interconversion. This is Formate--tetrahydrofolate ligase from Natranaerobius thermophilus (strain ATCC BAA-1301 / DSM 18059 / JW/NM-WN-LF).